Consider the following 342-residue polypeptide: Tetraacyldisaccharide 4'-kinase (342 aa).

56–63 (TAGGAGKT) lines the ATP pocket.

This sequence belongs to the LpxK family.

It carries out the reaction a lipid A disaccharide + ATP = a lipid IVA + ADP + H(+). It functions in the pathway glycolipid biosynthesis; lipid IV(A) biosynthesis; lipid IV(A) from (3R)-3-hydroxytetradecanoyl-[acyl-carrier-protein] and UDP-N-acetyl-alpha-D-glucosamine: step 6/6. Transfers the gamma-phosphate of ATP to the 4'-position of a tetraacyldisaccharide 1-phosphate intermediate (termed DS-1-P) to form tetraacyldisaccharide 1,4'-bis-phosphate (lipid IVA). This Parvibaculum lavamentivorans (strain DS-1 / DSM 13023 / NCIMB 13966) protein is Tetraacyldisaccharide 4'-kinase.